The following is a 211-amino-acid chain: Uridine kinase (211 aa).

15 to 22 contributes to the ATP binding site; it reads GGSGSGKT.

The protein belongs to the uridine kinase family.

It localises to the cytoplasm. It catalyses the reaction uridine + ATP = UMP + ADP + H(+). The catalysed reaction is cytidine + ATP = CMP + ADP + H(+). It functions in the pathway pyrimidine metabolism; CTP biosynthesis via salvage pathway; CTP from cytidine: step 1/3. The protein operates within pyrimidine metabolism; UMP biosynthesis via salvage pathway; UMP from uridine: step 1/1. The protein is Uridine kinase of Lactobacillus helveticus (strain DPC 4571).